A 510-amino-acid chain; its full sequence is Glutamate decarboxylase (510 aa).

107–109 (QLS) provides a ligand contact to substrate. Lysine 322 is modified (N6-(pyridoxal phosphate)lysine). Residue arginine 483 coordinates substrate.

Belongs to the group II decarboxylase family. As to quaternary structure, homodimer. Pyridoxal 5'-phosphate is required as a cofactor. In terms of tissue distribution, expressed in the head (at protein level).

The enzyme catalyses L-glutamate + H(+) = 4-aminobutanoate + CO2. In terms of biological role, catalyzes the production of GABA. The protein is Glutamate decarboxylase (Gad1) of Drosophila melanogaster (Fruit fly).